Consider the following 639-residue polypeptide: Lactose permease (639 aa).

A permease region spans residues 1-473; sequence MKDITKQKFS…AEIVIELEKT (473 aa). A run of 12 helical transmembrane segments spans residues 20 to 40, 59 to 79, 99 to 119, 124 to 144, 176 to 196, 207 to 227, 264 to 284, 294 to 314, 322 to 342, 347 to 367, 398 to 418, and 433 to 453; these read FALG…YFIV, IGLI…IDPI, VIGA…IFGL, WIAF…FYSF, IGWN…TFIA, WFGF…AVAF, LAYL…FYFF, FWIA…LYPV, KVLF…FIFG, MMVT…VVVL, ITGA…GMTG, and FEIY…VIFL. The region spanning 505–609 is the PTS EIIA type-1 domain; that stretch reads NEVDGNTLTG…QDDIIMYFTQ (105 aa). The residue at position 557 (His-557) is a Phosphohistidine; by HPr.

This sequence in the N-terminal section; belongs to the sodium:galactoside symporter (TC 2.A.2) family.

Its subcellular location is the cell membrane. Its function is as follows. Responsible for transport of beta-galactosides into the cell, with the concomitant uptake of protons (symport system), and also for transport of homologous and heterologous exchange of beta-galactosides. The sequence is that of Lactose permease (lacS) from Leuconostoc lactis.